The primary structure comprises 1014 residues: Isoleucine--tRNA ligase (1014 aa).

A 'HIGH' region motif is present at residues 48 to 58; that stretch reads PTANGRPGIHH. The short motif at 628-632 is the 'KMSKS' region element; sequence KMSKS. Position 631 (lysine 631) interacts with ATP.

Belongs to the class-I aminoacyl-tRNA synthetase family. IleS type 2 subfamily. Monomer. It depends on Zn(2+) as a cofactor.

Its subcellular location is the cytoplasm. The catalysed reaction is tRNA(Ile) + L-isoleucine + ATP = L-isoleucyl-tRNA(Ile) + AMP + diphosphate. Its function is as follows. Catalyzes the attachment of isoleucine to tRNA(Ile). As IleRS can inadvertently accommodate and process structurally similar amino acids such as valine, to avoid such errors it has two additional distinct tRNA(Ile)-dependent editing activities. One activity is designated as 'pretransfer' editing and involves the hydrolysis of activated Val-AMP. The other activity is designated 'posttransfer' editing and involves deacylation of mischarged Val-tRNA(Ile). The sequence is that of Isoleucine--tRNA ligase from Dehalococcoides mccartyi (strain ATCC BAA-2266 / KCTC 15142 / 195) (Dehalococcoides ethenogenes (strain 195)).